Reading from the N-terminus, the 256-residue chain is Indole-3-glycerol phosphate synthase (256 aa).

This sequence belongs to the TrpC family.

It catalyses the reaction 1-(2-carboxyphenylamino)-1-deoxy-D-ribulose 5-phosphate + H(+) = (1S,2R)-1-C-(indol-3-yl)glycerol 3-phosphate + CO2 + H2O. Its pathway is amino-acid biosynthesis; L-tryptophan biosynthesis; L-tryptophan from chorismate: step 4/5. The chain is Indole-3-glycerol phosphate synthase from Pelodictyon phaeoclathratiforme (strain DSM 5477 / BU-1).